The sequence spans 585 residues: Bestrophin-1 (585 aa).

The Cytoplasmic portion of the chain corresponds to 1–31 (MTITYTSQVANARLGSFSRLLLCWRGSIYKL). A10 contacts Ca(2+). The helical transmembrane segment at 32–51 (LYGEFFIFLLCYYIIRFIYR) threads the bilayer. Over 52-60 (LALTEEQQL) the chain is Extracellular. Residues 61–82 (MFEKLTLYCDSYIQLIPISFVL) form a helical membrane-spanning segment. The Cytoplasmic segment spans residues 83–237 (GFYVTLVVTR…DWISIPLVYT (155 aa)). The chain crosses the membrane as a helical span at residues 238–255 (QVVTVAVYSFFLTCLVGR). Over 256-274 (QFLNPAKAYPGHELDLVVP) the chain is Extracellular. Residues 275 to 288 (VFTFLQFFFYVGWL) traverse the membrane as a helical segment. Residues 289-585 (KVAEQLINPF…ALENRDEAHS (297 aa)) are Cytoplasmic-facing. Positions 293, 296, 301, and 304 each coordinate Ca(2+). The tract at residues 346 to 379 (PYTAASAQFRRASFMGSTFNISLNKEEMEFQPNQ) is auto-inhibitory segment.

This sequence belongs to the anion channel-forming bestrophin (TC 1.A.46) family. Calcium-sensitive chloride channel subfamily. Interacts with YWHAG; this interaction promotes the ligand-gated L-glutamate channel activity leading to the positive regulation of NMDA glutamate receptor activity through the L-glutamate secretion.

It is found in the cell membrane. The protein localises to the basolateral cell membrane. It catalyses the reaction chloride(in) = chloride(out). It carries out the reaction hydrogencarbonate(in) = hydrogencarbonate(out). The enzyme catalyses 4-aminobutanoate(in) = 4-aminobutanoate(out). The catalysed reaction is L-glutamate(out) = L-glutamate(in). In terms of biological role, ligand-gated anion channel that allows the movement of anions across cell membranes when activated by calcium (Ca2+). Allows the movement of chloride and hydrogencarbonate. Found in a partially open conformation leading to significantly smaller chloride movement. Upon F2R/PAR-1 activation, the sequestered calcium is released into the cytosol of astrocytes, leading to the (Ca2+)-dependent release of L-glutamate into the synaptic cleft that targets the neuronal postsynaptic GRIN2A/NMDAR receptor resulting in the synaptic plasticity regulation. Upon activation of the norepinephrine-alpha-1 adrenergic receptor signaling pathway, transports as well D-serine than L-glutamate in a (Ca2+)-dependent manner, leading to activation of adjacent NMDAR receptors and therefore regulates the heterosynaptic long-term depression and metaplasticity during initial memory acquisition. Releases the 4-aminobutanoate neurotransmitter in a (Ca2+)-dependent manner, and participates in its tonic release from cerebellar glial cells. The sequence is that of Bestrophin-1 (BEST1) from Macaca fascicularis (Crab-eating macaque).